The sequence spans 392 residues: Phosphoglycerate kinase (392 aa).

Substrate contacts are provided by residues 21–23 (DFN), arginine 36, 59–62 (HLGR), arginine 113, and arginine 146. ATP contacts are provided by residues lysine 197, glutamate 319, and 345–348 (GGDT).

This sequence belongs to the phosphoglycerate kinase family. Monomer.

It is found in the cytoplasm. The enzyme catalyses (2R)-3-phosphoglycerate + ATP = (2R)-3-phospho-glyceroyl phosphate + ADP. It functions in the pathway carbohydrate degradation; glycolysis; pyruvate from D-glyceraldehyde 3-phosphate: step 2/5. The polypeptide is Phosphoglycerate kinase (Francisella tularensis subsp. novicida (strain U112)).